We begin with the raw amino-acid sequence, 573 residues long: E3 ubiquitin-protein ligase RNF168 (573 aa).

Residues 16–55 form an RING-type zinc finger; sequence CQICVEILFEPVTLPCNHTLCKPCFESTVEKASLCCPFCR. A Phosphoserine modification is found at S70. The short motif at 110–128 is the LR motif 1 element; that stretch reads LSKPGELRREYEEEISKVE. A UMI motif motif is present at residues 143–151; that stretch reads EEYIQKLLA. Disordered regions lie at residues 153-174 and 196-277; these read EEEEEKRQAEKRHREMEEQLKS and ASPL…EDMP. The segment covering 157-174 has biased composition (basic and acidic residues); it reads EKRQAEKRHREMEEQLKS. An MIU motif 1 motif is present at residues 168–191; it reads MEEQLKSDEELARRLSLDINNFCE. S197 is modified (phosphoserine). K210 is covalently cross-linked (Glycyl lysine isopeptide (Lys-Gly) (interchain with G-Cter in SUMO2)). Positions 231–243 are enriched in polar residues; the sequence is PKSQLGSASQSEV. Residues 245–261 are compositionally biased toward basic and acidic residues; sequence QEDRKSSMSKKIDDNSD. A Phosphothreonine modification is found at T363. S416 is subject to Phosphoserine. The short motif at 440–463 is the MIU motif 2 element; the sequence is RHKQEKQDRLLALQLQEEVDQEQM. Residues 456 to 528 are disordered; sequence EEVDQEQMRP…NHQQPSFKIQ (73 aa). The span at 461–470 shows a compositional bias: basic and acidic residues; it reads EQMRPDRQKG. The short motif at 467-478 is the LR motif 2 element; it reads RQKGSPDGYQLR. S471 is modified (phosphoserine). Over residues 494–519 the composition is skewed to basic and acidic residues; the sequence is NSRDRNSKRQTELEQPKPRTDSKNEN. A Glycyl lysine isopeptide (Lys-Gly) (interchain with G-Cter in SUMO2) cross-link involves residue K530. The disordered stretch occupies residues 540–573; that stretch reads NSTNDNCNVSKTAHSLQPSKSQKSIFQMFQRVTK.

It belongs to the RNF168 family. As to quaternary structure, monomer. Interacts with UBE2N/UBC13. In terms of processing, sumoylated with SUMO1 by PIAS4 in response to double-strand breaks (DSBs). Post-translationally, ubiquitinated.

It is found in the nucleus. The catalysed reaction is S-ubiquitinyl-[E2 ubiquitin-conjugating enzyme]-L-cysteine + [acceptor protein]-L-lysine = [E2 ubiquitin-conjugating enzyme]-L-cysteine + N(6)-ubiquitinyl-[acceptor protein]-L-lysine.. The protein operates within protein modification; protein ubiquitination. Its function is as follows. E3 ubiquitin-protein ligase required for accumulation of repair proteins to sites of DNA damage. Acts with UBE2N/UBC13 to amplify the RNF8-dependent histone ubiquitination. Recruited to sites of DNA damage at double-strand breaks (DSBs) by binding to ubiquitinated histone H2A and H2AX and amplifies the RNF8-dependent H2A ubiquitination, promoting the formation of 'Lys-63'-linked ubiquitin conjugates. This leads to concentrate ubiquitinated histones H2A and H2AX at DNA lesions to the threshold required for recruitment of TP53BP1 and BRCA1. Also recruited at DNA interstrand cross-links (ICLs) sites and promotes accumulation of 'Lys-63'-linked ubiquitination of histones H2A and H2AX, leading to recruitment of FAAP20 and Fanconi anemia (FA) complex, followed by interstrand cross-link repair. H2A ubiquitination also mediates the ATM-dependent transcriptional silencing at regions flanking DSBs in cis, a mechanism to avoid collision between transcription and repair intermediates. Also involved in class switch recombination in immune system, via its role in regulation of DSBs repair. Following DNA damage, promotes the ubiquitination and degradation of JMJD2A/KDM4A in collaboration with RNF8, leading to unmask H4K20me2 mark and promote the recruitment of TP53BP1 at DNA damage sites. Not able to initiate 'Lys-63'-linked ubiquitination in vitro; possibly due to partial occlusion of the UBE2N/UBC13-binding region. Catalyzes monoubiquitination of 'Lys-13' and 'Lys-15' of nucleosomal histone H2A (H2AK13Ub and H2AK15Ub, respectively). The polypeptide is E3 ubiquitin-protein ligase RNF168 (Bos taurus (Bovine)).